We begin with the raw amino-acid sequence, 336 residues long: Inositol 2-dehydrogenase (336 aa).

Belongs to the Gfo/Idh/MocA family. As to quaternary structure, homotetramer.

The enzyme catalyses myo-inositol + NAD(+) = scyllo-inosose + NADH + H(+). Involved in the oxidation of myo-inositol (MI) to 2-keto-myo-inositol (2KMI or 2-inosose). In Pseudomonas syringae pv. syringae (strain B728a), this protein is Inositol 2-dehydrogenase.